Reading from the N-terminus, the 517-residue chain is N-acetylglucosamine-1-phosphodiester alpha-N-acetylglucosaminidase (517 aa).

Residues 1-25 form the signal peptide; the sequence is MAAPRGPGLFLIPALLGLLGVAWCS. Positions 26 to 49 are cleaved as a propeptide — removed in mature form; it reads LSFGVSRDDDLLLPYPLARRRPSR. The disordered stretch occupies residues 49–75; that stretch reads RDCARVRSGSPEQESWPPPPTNPGASH. Residues 50–453 lie on the Lumenal side of the membrane; the sequence is DCARVRSGSP…ASFTRTTWLA (404 aa). Cystine bridges form between cysteine 116-cysteine 149, cysteine 133-cysteine 324, cysteine 308-cysteine 315, cysteine 363-cysteine 374, and cysteine 381-cysteine 390. Asparagine 215 and asparagine 297 each carry an N-linked (GlcNAc...) asparagine glycan. The EGF-like domain maps to 359-391; it reads SELDCGPSNCSQHGLCTETGCHCDAGWTGSNCS. Residues asparagine 367, asparagine 389, and asparagine 421 are each glycosylated (N-linked (GlcNAc...) asparagine). The chain crosses the membrane as a helical span at residues 454 to 474; that stretch reads LTLTLIFLLLISTGVNVSLFL. The Cytoplasmic segment spans residues 475–517; the sequence is GSRAERNRHLDGDYVYHPLQEVNGEALTAEKEHMEETSNPFKD. The short motif at 488-491 is the Tyrosine-based internalization motif element; it reads YVYH. Residues 488–495 form a mediates the interaction with AP4M1 region; sequence YVYHPLQE. The short motif at 511 to 515 is the NPF internalization motif element; it reads TSNPF.

Homotetramer arranged as two disulfide-linked homodimers. Interacts with AP4M1. In terms of processing, the precursor is cleaved and activated in the trans-Golgi network by a furin endopeptidase.

It localises to the golgi apparatus. Its subcellular location is the golgi stack membrane. The protein localises to the trans-Golgi network. The catalysed reaction is N(4)-[6-(N-acetyl-alpha-D-glucosaminyl-1-phospho)-alpha-D-mannosyl-(1-&gt;2)-alpha-D-mannosyl-(glycan)]-L-asparaginyl-[protein] + H2O = N(4)-[6-phospho-alpha-D-mannosyl-(1-&gt;2)-alpha-D-mannosyl-(glycan)]-L-asparaginyl-[protein] + N-acetyl-D-glucosamine + H(+). The protein operates within protein modification; protein glycosylation. Catalyzes the second step in the formation of the mannose 6-phosphate targeting signal on lysosomal enzyme oligosaccharides by removing GlcNAc residues from GlcNAc-alpha-P-mannose moieties, which are formed in the first step. Also hydrolyzes UDP-GlcNAc, a sugar donor for Golgi N-acetylglucosaminyltransferases. The polypeptide is N-acetylglucosamine-1-phosphodiester alpha-N-acetylglucosaminidase (Nagpa) (Mus musculus (Mouse)).